The chain runs to 402 residues: Tryptophan synthase beta chain (402 aa).

N6-(pyridoxal phosphate)lysine is present on lysine 88.

This sequence belongs to the TrpB family. In terms of assembly, tetramer of two alpha and two beta chains. Requires pyridoxal 5'-phosphate as cofactor.

It catalyses the reaction (1S,2R)-1-C-(indol-3-yl)glycerol 3-phosphate + L-serine = D-glyceraldehyde 3-phosphate + L-tryptophan + H2O. Its pathway is amino-acid biosynthesis; L-tryptophan biosynthesis; L-tryptophan from chorismate: step 5/5. Functionally, the beta subunit is responsible for the synthesis of L-tryptophan from indole and L-serine. The sequence is that of Tryptophan synthase beta chain (trpB) from Pasteurella multocida (strain Pm70).